Reading from the N-terminus, the 473-residue chain is MPRLASAVLPLCSQHPGQCGLFPLEKSLDAFAARYRLAEMAEHTLDVQYYIWQDDMSGRLLFSALLAAAKRGVRVRLLLDDNNTPGLDDILRLLDSHPRIEVRLFNPFSFRLLRPLGYITDFSRLNRRMHNKSFTVDGVVTLVGGRNIGDAYFGAGEEPLFSDLDVMAIGPVVEDVADDFARYWYCKSVSPLQQVLDVPEGEMADRIELPASWHNDAMTHRYLRKMESSPFINHLVDGTLPLIWAKTRLLSDDPAKGEGKAKRHSLLPQRLFDIMGSPSERIDIISSYFVPTRAGVAQLLRMVRKGVKIAILTNSLAANDVAVVHAGYARWRKKLLRYGVELYELKPTREQSSTLHDRGITGNSGASLHAKTFSIDGKTVFIGSFNFDPRSTLLNTEMGFVIESETLAQLIDKRFIQSQYDAAWQLRLDRWGRINWVDRHAKKEIILKKEPATSFWKRVMVRLASILPVEWLL.

PLD phosphodiesterase domains are found at residues 125 to 152 (LNRR…GDAY) and 364 to 391 (SGAS…DPRS). Catalysis depends on residues H130, K132, D137, H369, K371, and D376.

Belongs to the phospholipase D family. Cardiolipin synthase subfamily. ClsC sub-subfamily.

The catalysed reaction is a 1,2-diacyl-sn-glycero-3-phospho-(1'-sn-glycerol) + a 1,2-diacyl-sn-glycero-3-phosphoethanolamine = a cardiolipin + ethanolamine. Its activity is regulated as follows. Full activity requires coexpression with the neighboring gene ymdB. In terms of biological role, catalyzes the synthesis of cardiolipin (CL) (diphosphatidylglycerol) from phosphatidylglycerol (PG) and phosphatidylethanolamine (PE). The chain is Cardiolipin synthase C from Escherichia coli (strain K12).